Consider the following 282-residue polypeptide: Protease HtpX homolog (282 aa).

A run of 2 helical transmembrane segments spans residues 7 to 26 (TTVL…GAVG) and 30 to 49 (GMMI…YWFS). His131 serves as a coordination point for Zn(2+). Glu132 is an active-site residue. His135 contacts Zn(2+). 2 helical membrane-spanning segments follow: residues 141-161 (ILVS…ARMA) and 183-203 (LGLV…QLAI). Glu208 serves as a coordination point for Zn(2+).

This sequence belongs to the peptidase M48B family. The cofactor is Zn(2+).

Its subcellular location is the cell inner membrane. The polypeptide is Protease HtpX homolog (Syntrophobacter fumaroxidans (strain DSM 10017 / MPOB)).